The sequence spans 148 residues: MTMAARLMLVAALLCAAAAAATAQQATNVRATYHYYRPAQNNWDLGAPAVSAYCATWDASKPLSWRSKYGWTAFCGPAGAHGQAACGKCLRVTNPATGAQITARIVDQCANGGLDLDWDTVFTKIDTNGIGYQQGHLNVNYQFVDCRD.

A signal peptide spans 1–23; it reads MTMAARLMLVAALLCAAAAAATA. Glutamine 24 bears the Pyrrolidone carboxylic acid mark. The 125-residue stretch at 24–148 folds into the Barwin domain; the sequence is QQATNVRATY…VNYQFVDCRD (125 aa). Intrachain disulfides connect cysteine 54-cysteine 86, cysteine 75-cysteine 109, and cysteine 89-cysteine 146.

In terms of assembly, monomer.

Functionally, shows antifungal activity towards B.cinerea and towards the wheat-specific pathogenic fungi F.culmorum and F.graminearum (groups 1 and 2). This chain is Wheatwin-2 (PR4B), found in Triticum aestivum (Wheat).